We begin with the raw amino-acid sequence, 88 residues long: RNA-binding protein Hfq (88 aa).

Residues 9–68 form the Sm domain; that stretch reads DPFLNALRRERIPVSIYLVNGIKLQGQIESFDQFVILLKNTVNQMVYKHAISTVVPARAV. The interval 66–88 is disordered; sequence RAVSHHSGEQQRAPSDRPEKTED. Over residues 71–88 the composition is skewed to basic and acidic residues; the sequence is HSGEQQRAPSDRPEKTED.

Belongs to the Hfq family. Homohexamer.

RNA chaperone that binds small regulatory RNA (sRNAs) and mRNAs to facilitate mRNA translational regulation in response to envelope stress, environmental stress and changes in metabolite concentrations. Also binds with high specificity to tRNAs. The chain is RNA-binding protein Hfq from Vibrio atlanticus (strain LGP32) (Vibrio splendidus (strain Mel32)).